The chain runs to 117 residues: Large ribosomal subunit protein eL8 (117 aa).

This sequence belongs to the eukaryotic ribosomal protein eL8 family. In terms of assembly, part of the 50S ribosomal subunit. Probably part of the RNase P complex.

It is found in the cytoplasm. In terms of biological role, multifunctional RNA-binding protein that recognizes the K-turn motif in ribosomal RNA, the RNA component of RNase P, box H/ACA, box C/D and box C'/D' sRNAs. The sequence is that of Large ribosomal subunit protein eL8 from Methanocaldococcus jannaschii (strain ATCC 43067 / DSM 2661 / JAL-1 / JCM 10045 / NBRC 100440) (Methanococcus jannaschii).